The following is a 179-amino-acid chain: Large ribosomal subunit protein uL6 (179 aa).

The protein belongs to the universal ribosomal protein uL6 family. In terms of assembly, part of the 50S ribosomal subunit.

Functionally, this protein binds to the 23S rRNA, and is important in its secondary structure. It is located near the subunit interface in the base of the L7/L12 stalk, and near the tRNA binding site of the peptidyltransferase center. This is Large ribosomal subunit protein uL6 from Prochlorococcus marinus (strain NATL2A).